We begin with the raw amino-acid sequence, 35 residues long: Cupiennin-1b (35 aa).

Position 35 is a glutamic acid 1-amide (E35).

Belongs to the cationic peptide 04 (cupiennin) family. 01 subfamily. In terms of tissue distribution, expressed by the venom gland.

The protein localises to the secreted. Its function is as follows. Has antimicrobial activity against E.coli, E.faecalis, P.aeruginosa, and S.aureus. Has insecticidal and hemolytic activities. Probably acts by disturbing membrane function with its amphipathic structure. The protein is Cupiennin-1b of Cupiennius salei (American wandering spider).